Here is a 446-residue protein sequence, read N- to C-terminus: Phosphoglucosamine mutase (446 aa).

S101 acts as the Phosphoserine intermediate in catalysis. Residues S101, D240, D242, and D244 each coordinate Mg(2+). The residue at position 101 (S101) is a Phosphoserine.

This sequence belongs to the phosphohexose mutase family. Mg(2+) serves as cofactor. Activated by phosphorylation.

The enzyme catalyses alpha-D-glucosamine 1-phosphate = D-glucosamine 6-phosphate. In terms of biological role, catalyzes the conversion of glucosamine-6-phosphate to glucosamine-1-phosphate. The sequence is that of Phosphoglucosamine mutase from Pseudomonas putida (strain ATCC 47054 / DSM 6125 / CFBP 8728 / NCIMB 11950 / KT2440).